A 69-amino-acid chain; its full sequence is Protein translocase subunit SecE (69 aa).

A helical membrane pass occupies residues 43–63; the sequence is VAGAGILVIGFVGFLIYVLLT.

This sequence belongs to the SecE/SEC61-gamma family. As to quaternary structure, component of the Sec protein translocase complex. Heterotrimer consisting of SecY (alpha), SecG (beta) and SecE (gamma) subunits. The heterotrimers can form oligomers, although 1 heterotrimer is thought to be able to translocate proteins. Interacts with the ribosome. May interact with SecDF, and other proteins may be involved.

Its subcellular location is the cell membrane. Its function is as follows. Essential subunit of the Sec protein translocation channel SecYEG. Clamps together the 2 halves of SecY. May contact the channel plug during translocation. This Methanococcoides burtonii (strain DSM 6242 / NBRC 107633 / OCM 468 / ACE-M) protein is Protein translocase subunit SecE.